The sequence spans 220 residues: Cysteine-rich venom protein VAR5 (220 aa).

A signal peptide spans 1–22 (MILLKLYLTLAAILCQSRGTTS). The SCP domain occupies 41 to 169 (NKHNDLRRTV…PLKYFLVCQY (129 aa)). Disulfide bonds link Cys-77–Cys-156, Cys-95–Cys-170, Cys-151–Cys-167, Cys-189–Cys-196, and Cys-192–Cys-201. Positions 205 to 220 (CEHSNQYINCPDLTKQ) constitute a ShKT domain.

This sequence belongs to the CRISP family. Contains 8 disulfide bonds. In terms of tissue distribution, expressed by the venom gland.

It localises to the secreted. Blocks ryanodine receptors, and potassium channels. The sequence is that of Cysteine-rich venom protein VAR5 from Varanus acanthurus (Ridge-tailed monitor).